A 385-amino-acid chain; its full sequence is Galactokinase (385 aa).

Substrate is bound at residue 34-37 (EHTD). ATP is bound at residue 124–130 (SSGLSSS). Mg(2+)-binding residues include serine 130 and glutamate 162. Residue aspartate 174 is the Proton acceptor of the active site. Residue tyrosine 223 participates in substrate binding.

It belongs to the GHMP kinase family. GalK subfamily.

It localises to the cytoplasm. It catalyses the reaction alpha-D-galactose + ATP = alpha-D-galactose 1-phosphate + ADP + H(+). The protein operates within carbohydrate metabolism; galactose metabolism. Catalyzes the transfer of the gamma-phosphate of ATP to D-galactose to form alpha-D-galactose-1-phosphate (Gal-1-P). In Actinobacillus succinogenes (strain ATCC 55618 / DSM 22257 / CCUG 43843 / 130Z), this protein is Galactokinase.